Consider the following 64-residue polypeptide: Conotoxin mr5.1a (64 aa).

The first 19 residues, 1-19 (MRCVPVFVILLLLIASAPS), serve as a signal peptide directing secretion. Positions 20 to 48 (VDARLKTKDDMPLPSSHANIKRTLQIHRN) are excised as a propeptide. 4-carboxyglutamate is present on Glu60.

It belongs to the conotoxin T superfamily. Contains 2 disulfide bonds that can be either 'C1-C3, C2-C4' or 'C1-C4, C2-C3', since these disulfide connectivities have been observed for conotoxins with cysteine framework V (for examples, see AC P0DQQ7 and AC P81755). In terms of tissue distribution, expressed by the venom duct.

It is found in the secreted. The protein is Conotoxin mr5.1a of Conus marmoreus (Marble cone).